A 77-amino-acid polypeptide reads, in one-letter code: SS18-like protein 2 (77 aa).

Positions Tyr50–Val53 match the SH2-binding motif.

This sequence belongs to the SS18 family.

The polypeptide is SS18-like protein 2 (SS18L2) (Homo sapiens (Human)).